The sequence spans 488 residues: DNA polymerase II small subunit (488 aa).

It belongs to the DNA polymerase delta/II small subunit family. Heterodimer of a large subunit and a small subunit.

It carries out the reaction DNA(n) + a 2'-deoxyribonucleoside 5'-triphosphate = DNA(n+1) + diphosphate. The enzyme catalyses Exonucleolytic cleavage in the 3'- to 5'-direction to yield nucleoside 5'-phosphates.. In terms of biological role, possesses two activities: a DNA synthesis (polymerase) and an exonucleolytic activity that degrades single-stranded DNA in the 3' to 5' direction. Has a template-primer preference which is characteristic of a replicative DNA polymerase. This chain is DNA polymerase II small subunit (polB), found in Archaeoglobus fulgidus (strain ATCC 49558 / DSM 4304 / JCM 9628 / NBRC 100126 / VC-16).